The primary structure comprises 258 residues: Small ribosomal subunit protein eS1 (258 aa).

The segment at 235–258 (VASSGDAGSAVRRDGYEPPVQESV) is disordered.

This sequence belongs to the eukaryotic ribosomal protein eS1 family. As to quaternary structure, component of the small ribosomal subunit. Mature ribosomes consist of a small (40S) and a large (60S) subunit. The 40S subunit contains about 33 different proteins and 1 molecule of RNA (18S). The 60S subunit contains about 49 different proteins and 3 molecules of RNA (28S, 5.8S and 5S).

The protein localises to the cytoplasm. This is Small ribosomal subunit protein eS1 from Trichoplax adhaerens (Trichoplax reptans).